The sequence spans 115 residues: HTH-type transcriptional regulator SarR (115 aa).

Residues 51–74 (SKEIAKCSEFKPYYLTKALQKLKD) constitute a DNA-binding region (H-T-H motif).

The protein belongs to the SarA family. In terms of assembly, homodimer.

It is found in the cytoplasm. Its function is as follows. Negative regulator of sarA transcription at late exponential and stationary growth phases. It contributes to the modulation of target genes downstream of the sarA regulatory cascade. Also, positively regulates expression of primary transcripts RNAII and RNAIII generated by agr (virulence accessory gene regulator) locus. The protein is HTH-type transcriptional regulator SarR (sarR) of Staphylococcus aureus (strain NCTC 8325 / PS 47).